A 120-amino-acid polypeptide reads, in one-letter code: Ribosome-binding factor A (120 aa).

It belongs to the RbfA family. As to quaternary structure, monomer. Binds 30S ribosomal subunits, but not 50S ribosomal subunits or 70S ribosomes.

It is found in the cytoplasm. Its function is as follows. One of several proteins that assist in the late maturation steps of the functional core of the 30S ribosomal subunit. Associates with free 30S ribosomal subunits (but not with 30S subunits that are part of 70S ribosomes or polysomes). Required for efficient processing of 16S rRNA. May interact with the 5'-terminal helix region of 16S rRNA. The sequence is that of Ribosome-binding factor A from Clostridium botulinum (strain Okra / Type B1).